A 636-amino-acid chain; its full sequence is Golgin subfamily A member 8F (636 aa).

Disordered regions lie at residues 1–72 (MAEE…SATL) and 107–127 (NKQV…KQKA). A compositionally biased stretch (polar residues) spans 38 to 50 (TNGSIHETATSGG). Coiled coils occupy residues 93 to 148 (VSQL…LNTD), 211 to 263 (LEQS…MSQE), and 306 to 412 (EVEL…QQKQ). Residues 109–127 (QVEHQLEEEKKANNEKQKA) show a composition bias toward basic and acidic residues. 4 disordered regions span residues 344–364 (LREQ…QEER), 422–449 (ALPG…SIPQ), 496–537 (PITK…GVAA), and 588–612 (PVQG…QDHQ). The segment covering 429 to 441 (GGGHLDSEGEEAP) has biased composition (basic and acidic residues). Residues 509 to 522 (PGGGHHQAGPGQGG) show a composition bias toward gly residues.

It belongs to the GOLGA8 family.

This Homo sapiens (Human) protein is Golgin subfamily A member 8F.